A 499-amino-acid chain; its full sequence is Beta-amylase (499 aa).

Asp55, His95, and Asp103 together coordinate substrate. The active-site Proton donor is Glu188. The substrate site is built by Lys298, His303, and Thr345. Catalysis depends on Glu383, which acts as the Proton acceptor. Substrate-binding positions include 384–385 (NA) and Arg423.

This sequence belongs to the glycosyl hydrolase 14 family. Homotetramer.

The enzyme catalyses Hydrolysis of (1-&gt;4)-alpha-D-glucosidic linkages in polysaccharides so as to remove successive maltose units from the non-reducing ends of the chains.. This is Beta-amylase (BMY1) from Ipomoea batatas (Sweet potato).